The primary structure comprises 327 residues: Biotin synthase (327 aa).

The Radical SAM core domain occupies 52–279 (NAIQRSTLLS…TSWVRLSAGR (228 aa)). Cys-67, Cys-71, and Cys-74 together coordinate [4Fe-4S] cluster. [2Fe-2S] cluster contacts are provided by Cys-111, Cys-142, Cys-202, and Arg-274.

Belongs to the radical SAM superfamily. Biotin synthase family. In terms of assembly, homodimer. [4Fe-4S] cluster is required as a cofactor. Requires [2Fe-2S] cluster as cofactor.

It carries out the reaction (4R,5S)-dethiobiotin + (sulfur carrier)-SH + 2 reduced [2Fe-2S]-[ferredoxin] + 2 S-adenosyl-L-methionine = (sulfur carrier)-H + biotin + 2 5'-deoxyadenosine + 2 L-methionine + 2 oxidized [2Fe-2S]-[ferredoxin]. It functions in the pathway cofactor biosynthesis; biotin biosynthesis; biotin from 7,8-diaminononanoate: step 2/2. Catalyzes the conversion of dethiobiotin (DTB) to biotin by the insertion of a sulfur atom into dethiobiotin via a radical-based mechanism. This is Biotin synthase from Dechloromonas aromatica (strain RCB).